We begin with the raw amino-acid sequence, 46 residues long: uncharacterized protein (46 aa).

This is an uncharacterized protein from Archaeoglobus fulgidus (strain ATCC 49558 / DSM 4304 / JCM 9628 / NBRC 100126 / VC-16).